A 159-amino-acid polypeptide reads, in one-letter code: Peptide deformylase (159 aa).

Cys88 and His130 together coordinate Fe cation. The active site involves Glu131. Residue His134 coordinates Fe cation.

This sequence belongs to the polypeptide deformylase family. Fe(2+) is required as a cofactor.

The enzyme catalyses N-terminal N-formyl-L-methionyl-[peptide] + H2O = N-terminal L-methionyl-[peptide] + formate. Functionally, removes the formyl group from the N-terminal Met of newly synthesized proteins. Requires at least a dipeptide for an efficient rate of reaction. N-terminal L-methionine is a prerequisite for activity but the enzyme has broad specificity at other positions. The chain is Peptide deformylase from Caldanaerobacter subterraneus subsp. tengcongensis (strain DSM 15242 / JCM 11007 / NBRC 100824 / MB4) (Thermoanaerobacter tengcongensis).